The sequence spans 214 residues: Probable transaldolase (214 aa).

The active-site Schiff-base intermediate with substrate is the Lys-83.

It belongs to the transaldolase family. Type 3B subfamily.

The protein localises to the cytoplasm. It catalyses the reaction D-sedoheptulose 7-phosphate + D-glyceraldehyde 3-phosphate = D-erythrose 4-phosphate + beta-D-fructose 6-phosphate. Its pathway is carbohydrate degradation; pentose phosphate pathway; D-glyceraldehyde 3-phosphate and beta-D-fructose 6-phosphate from D-ribose 5-phosphate and D-xylulose 5-phosphate (non-oxidative stage): step 2/3. Transaldolase is important for the balance of metabolites in the pentose-phosphate pathway. The protein is Probable transaldolase of Geotalea uraniireducens (strain Rf4) (Geobacter uraniireducens).